The sequence spans 121 residues: Small ribosomal subunit protein bS16 (121 aa).

Over residues 97-114 the composition is skewed to basic and acidic residues; it reads LAKAKTKDEENDNSKVES. Residues 97–121 form a disordered region; it reads LAKAKTKDEENDNSKVESEGNEAES.

It belongs to the bacterial ribosomal protein bS16 family.

The chain is Small ribosomal subunit protein bS16 from Prochlorococcus marinus (strain AS9601).